Reading from the N-terminus, the 865-residue chain is Protein translocase subunit SecA (865 aa).

ATP contacts are provided by residues Gln85, 103–107 (GEGKT), and Asp505. Residues Cys847, Cys849, Cys858, and His859 each contribute to the Zn(2+) site.

It belongs to the SecA family. As to quaternary structure, monomer and homodimer. Part of the essential Sec protein translocation apparatus which comprises SecA, SecYEG and auxiliary proteins SecDF. Other proteins may also be involved. Zn(2+) serves as cofactor.

It is found in the cell membrane. Its subcellular location is the cytoplasm. The catalysed reaction is ATP + H2O + cellular proteinSide 1 = ADP + phosphate + cellular proteinSide 2.. Part of the Sec protein translocase complex. Interacts with the SecYEG preprotein conducting channel. Has a central role in coupling the hydrolysis of ATP to the transfer of proteins into and across the cell membrane, serving as an ATP-driven molecular motor driving the stepwise translocation of polypeptide chains across the membrane. This Lactococcus lactis subsp. cremoris (strain SK11) protein is Protein translocase subunit SecA.